Here is a 121-residue protein sequence, read N- to C-terminus: Small ribosomal subunit protein bS6 (121 aa).

A disordered region spans residues 99–121 (PSLMMRNVEREEARKTQQQEFAA). Basic and acidic residues predominate over residues 105–115 (NVEREEARKTQ).

The protein belongs to the bacterial ribosomal protein bS6 family.

Its function is as follows. Binds together with bS18 to 16S ribosomal RNA. This chain is Small ribosomal subunit protein bS6, found in Polaromonas naphthalenivorans (strain CJ2).